An 88-amino-acid chain; its full sequence is Monensin polyketide synthase acyl carrier protein (88 aa).

The Carrier domain occupies 5–82; that stretch reads PFTLADLQRI…ELIDHVNERL (78 aa). O-(pantetheine 4'-phosphoryl)serine is present on Ser42.

Post-translationally, 4'-phosphopantetheine is transferred from CoA to a specific serine of the apo-ACP-like protein.

Its pathway is antifungal biosynthesis; monensin biosynthesis. Acyl carrier protein. This is Monensin polyketide synthase acyl carrier protein from Streptomyces virginiae (Streptomyces cinnamonensis).